The primary structure comprises 162 residues: Ribosome maturation factor RimM (162 aa).

One can recognise a PRC barrel domain in the interval 91–162 (DGSFYIDDLI…LIDVVIIEGM (72 aa)).

The protein belongs to the RimM family. As to quaternary structure, binds ribosomal protein uS19.

It localises to the cytoplasm. An accessory protein needed during the final step in the assembly of 30S ribosomal subunit, possibly for assembly of the head region. Essential for efficient processing of 16S rRNA. May be needed both before and after RbfA during the maturation of 16S rRNA. It has affinity for free ribosomal 30S subunits but not for 70S ribosomes. This Finegoldia magna (strain ATCC 29328 / DSM 20472 / WAL 2508) (Peptostreptococcus magnus) protein is Ribosome maturation factor RimM.